Consider the following 482-residue polypeptide: Protein DETOXIFICATION 13 (482 aa).

12 helical membrane passes run 39–59 (LICF…LQII), 77–97 (LASS…SCAL), 124–144 (LALV…LLVF), 159–179 (AACL…TRYF), 188–208 (LLIT…LLVY), 218–238 (ALAL…LMCF), 268–288 (AAMI…SGLL), 297–317 (VLSV…AIAA), 337–357 (IVVY…STSL), 381–401 (MAPL…LSGI), 416–436 (LGAF…WIHL), and 439–459 (VGLW…LTLV).

The protein belongs to the multi antimicrobial extrusion (MATE) (TC 2.A.66.1) family.

The protein localises to the membrane. This is Protein DETOXIFICATION 13 from Arabidopsis thaliana (Mouse-ear cress).